Consider the following 284-residue polypeptide: 4-hydroxy-3-methylbut-2-enyl diphosphate reductase (284 aa).

Cys-12 serves as a coordination point for [4Fe-4S] cluster. His-40 and His-72 together coordinate (2E)-4-hydroxy-3-methylbut-2-enyl diphosphate. Residues His-40 and His-72 each contribute to the dimethylallyl diphosphate site. Isopentenyl diphosphate is bound by residues His-40 and His-72. Cys-94 lines the [4Fe-4S] cluster pocket. His-122 serves as a coordination point for (2E)-4-hydroxy-3-methylbut-2-enyl diphosphate. A dimethylallyl diphosphate-binding site is contributed by His-122. His-122 is a binding site for isopentenyl diphosphate. The active-site Proton donor is Glu-124. Thr-161 contacts (2E)-4-hydroxy-3-methylbut-2-enyl diphosphate. Position 193 (Cys-193) interacts with [4Fe-4S] cluster. Positions 221, 223, and 264 each coordinate (2E)-4-hydroxy-3-methylbut-2-enyl diphosphate. Residues Ser-221, Asn-223, and Ser-264 each coordinate dimethylallyl diphosphate. Isopentenyl diphosphate is bound by residues Ser-221, Asn-223, and Ser-264.

It belongs to the IspH family. The cofactor is [4Fe-4S] cluster.

The catalysed reaction is isopentenyl diphosphate + 2 oxidized [2Fe-2S]-[ferredoxin] + H2O = (2E)-4-hydroxy-3-methylbut-2-enyl diphosphate + 2 reduced [2Fe-2S]-[ferredoxin] + 2 H(+). It carries out the reaction dimethylallyl diphosphate + 2 oxidized [2Fe-2S]-[ferredoxin] + H2O = (2E)-4-hydroxy-3-methylbut-2-enyl diphosphate + 2 reduced [2Fe-2S]-[ferredoxin] + 2 H(+). The protein operates within isoprenoid biosynthesis; dimethylallyl diphosphate biosynthesis; dimethylallyl diphosphate from (2E)-4-hydroxy-3-methylbutenyl diphosphate: step 1/1. It functions in the pathway isoprenoid biosynthesis; isopentenyl diphosphate biosynthesis via DXP pathway; isopentenyl diphosphate from 1-deoxy-D-xylulose 5-phosphate: step 6/6. Its function is as follows. Catalyzes the conversion of 1-hydroxy-2-methyl-2-(E)-butenyl 4-diphosphate (HMBPP) into a mixture of isopentenyl diphosphate (IPP) and dimethylallyl diphosphate (DMAPP). Acts in the terminal step of the DOXP/MEP pathway for isoprenoid precursor biosynthesis. In Dehalococcoides mccartyi (strain ATCC BAA-2100 / JCM 16839 / KCTC 5957 / BAV1), this protein is 4-hydroxy-3-methylbut-2-enyl diphosphate reductase.